Here is a 235-residue protein sequence, read N- to C-terminus: MKKLSKRMTALSTKIEDRTYAPLEALAIIKENANAKFDETIEAHIRLGIDPKYTDQQLRTTVALPHGTGQSIKIAVITSGENVAKAKSAGADLFGEEDLVESINKGNMDFDLLIATPDMMPKVAKLGRVLGPRGLMPNPKAGTVTSDIASAIKEFKAGKLEFRADKAGIVHVRFGKASFTENALFENLKTLQESIDKNKPSGAKGKYWKTFYVTSTMGPSVQVDINALQDYQPES.

This sequence belongs to the universal ribosomal protein uL1 family. Part of the 50S ribosomal subunit.

Its function is as follows. Binds directly to 23S rRNA. The L1 stalk is quite mobile in the ribosome, and is involved in E site tRNA release. Functionally, protein L1 is also a translational repressor protein, it controls the translation of the L11 operon by binding to its mRNA. This Prochlorococcus marinus (strain MIT 9515) protein is Large ribosomal subunit protein uL1.